A 441-amino-acid polypeptide reads, in one-letter code: Histone-lysine N-methyltransferase set9 (441 aa).

One can recognise an SET domain in the interval 108 to 221 (CKFEICSTNQ…PGEEITTFYS (114 aa)).

Belongs to the class V-like SAM-binding methyltransferase superfamily. Histone-lysine methyltransferase family. Suvar4-20 subfamily.

Its subcellular location is the nucleus. It localises to the chromosome. The enzyme catalyses L-lysyl(20)-[histone H4] + 3 S-adenosyl-L-methionine = N(6),N(6),N(6)-trimethyl-L-lysyl(20)-[histone H4] + 3 S-adenosyl-L-homocysteine + 3 H(+). Histone methyltransferase that specifically trimethylates 'Lys-20' of histone H4 to form H4K20me3. H4 'Lys-20' methylation is apparently not involved in the regulation of gene expression or heterochromatin function but participates in DNA damage response by giving a 'histone mark' required for the recruitment of the checkpoint protein Crb2 to sites of DNA damage. The polypeptide is Histone-lysine N-methyltransferase set9 (set9) (Schizosaccharomyces pombe (strain 972 / ATCC 24843) (Fission yeast)).